We begin with the raw amino-acid sequence, 86 residues long: CRISPR-associated endoribonuclease Cas2 (86 aa).

Asp-8 serves as a coordination point for Mg(2+).

Belongs to the CRISPR-associated endoribonuclease Cas2 protein family. Homodimer, forms a heterotetramer with a Cas1 homodimer. It depends on Mg(2+) as a cofactor.

Its function is as follows. CRISPR (clustered regularly interspaced short palindromic repeat), is an adaptive immune system that provides protection against mobile genetic elements (viruses, transposable elements and conjugative plasmids). CRISPR clusters contain sequences complementary to antecedent mobile elements and target invading nucleic acids. CRISPR clusters are transcribed and processed into CRISPR RNA (crRNA). Functions as a ssRNA-specific endoribonuclease. Involved in the integration of spacer DNA into the CRISPR cassette. Plasmid targeted by CRISPR locus P1 transform wild-type cells very poorly. This Haloferax volcanii (strain ATCC 29605 / DSM 3757 / JCM 8879 / NBRC 14742 / NCIMB 2012 / VKM B-1768 / DS2) (Halobacterium volcanii) protein is CRISPR-associated endoribonuclease Cas2.